Here is a 109-residue protein sequence, read N- to C-terminus: uncharacterized protein (109 aa).

Positions Met-1–Val-26 are disordered.

This is an uncharacterized protein from Mycobacterium bovis (strain ATCC BAA-935 / AF2122/97).